We begin with the raw amino-acid sequence, 341 residues long: Holliday junction branch migration complex subunit RuvB (341 aa).

The interval 1–182 (MTDADPTLRP…FGIPTRLLFY (182 aa)) is large ATPase domain (RuvB-L). Residues Leu21, Arg22, Gly63, Lys66, Thr67, Thr68, 129-131 (EDF), Arg172, Tyr182, and Arg219 contribute to the ATP site. Thr67 provides a ligand contact to Mg(2+). Positions 183-253 (TVDELFEIVS…LADHALTRLG (71 aa)) are small ATPAse domain (RuvB-S). The interval 256–341 (QLGLDGADRR…RPPGQSDLFG (86 aa)) is head domain (RuvB-H). DNA is bound by residues Arg292, Arg311, and Arg316.

This sequence belongs to the RuvB family. Homohexamer. Forms an RuvA(8)-RuvB(12)-Holliday junction (HJ) complex. HJ DNA is sandwiched between 2 RuvA tetramers; dsDNA enters through RuvA and exits via RuvB. An RuvB hexamer assembles on each DNA strand where it exits the tetramer. Each RuvB hexamer is contacted by two RuvA subunits (via domain III) on 2 adjacent RuvB subunits; this complex drives branch migration. In the full resolvosome a probable DNA-RuvA(4)-RuvB(12)-RuvC(2) complex forms which resolves the HJ.

The protein resides in the cytoplasm. It carries out the reaction ATP + H2O = ADP + phosphate + H(+). The RuvA-RuvB-RuvC complex processes Holliday junction (HJ) DNA during genetic recombination and DNA repair, while the RuvA-RuvB complex plays an important role in the rescue of blocked DNA replication forks via replication fork reversal (RFR). RuvA specifically binds to HJ cruciform DNA, conferring on it an open structure. The RuvB hexamer acts as an ATP-dependent pump, pulling dsDNA into and through the RuvAB complex. RuvB forms 2 homohexamers on either side of HJ DNA bound by 1 or 2 RuvA tetramers; 4 subunits per hexamer contact DNA at a time. Coordinated motions by a converter formed by DNA-disengaged RuvB subunits stimulates ATP hydrolysis and nucleotide exchange. Immobilization of the converter enables RuvB to convert the ATP-contained energy into a lever motion, pulling 2 nucleotides of DNA out of the RuvA tetramer per ATP hydrolyzed, thus driving DNA branch migration. The RuvB motors rotate together with the DNA substrate, which together with the progressing nucleotide cycle form the mechanistic basis for DNA recombination by continuous HJ branch migration. Branch migration allows RuvC to scan DNA until it finds its consensus sequence, where it cleaves and resolves cruciform DNA. The sequence is that of Holliday junction branch migration complex subunit RuvB from Ruegeria pomeroyi (strain ATCC 700808 / DSM 15171 / DSS-3) (Silicibacter pomeroyi).